The chain runs to 541 residues: Long-chain-fatty-acid--CoA ligase (541 aa).

Residue T184 coordinates Mg(2+). Residues V231 and W234 each coordinate ATP. Residues G302, Q322, G323, and T327 each coordinate tetradecanoyl-AMP. 2 residues coordinate ATP: G323 and T327. Mg(2+) is bound at residue E328. Positions 418, 435, 439, and 444 each coordinate ATP. Tetradecanoyl-AMP is bound by residues D418, K435, and K439.

This sequence belongs to the ATP-dependent AMP-binding enzyme family. As to quaternary structure, forms a domain swapped homodimer. It depends on Mg(2+) as a cofactor.

The catalysed reaction is a long-chain fatty acid + ATP + CoA = a long-chain fatty acyl-CoA + AMP + diphosphate. It carries out the reaction tetradecanoate + ATP + CoA = tetradecanoyl-CoA + AMP + diphosphate. It catalyses the reaction hexadecanoate + ATP + CoA = hexadecanoyl-CoA + AMP + diphosphate. It participates in lipid metabolism; fatty acid metabolism. In terms of biological role, catalyzes the esterification of a number of long chain fatty acids with CoA, resulting in the formation of long-chain fatty acyl-CoA. Myristate (C14) is the most efficiently processed fatty acid, followed by palmitate (C16). Also catalyzes the esterification of stearate (C18) and laurate (C12), but at lower efficiency. Does not catalyze the esterification of the unsaturated fatty acids mysteroleic and palmitoleic acids in vitro. In Thermus thermophilus (strain ATCC 27634 / DSM 579 / HB8), this protein is Long-chain-fatty-acid--CoA ligase.